The following is a 442-amino-acid chain: Choline monooxygenase, chloroplastic (442 aa).

The N-terminal 58 residues, 1 to 58 (MASSASMLINYPTTFCGVRNSSNPNNDQFSDQINIPSSLNNNINISKITSKTNKIIPK), are a transit peptide targeting the chloroplast. Positions 123–229 (WQVAGYSDQI…VAIWGPFVLI (107 aa)) constitute a Rieske domain. [2Fe-2S] cluster-binding residues include cysteine 165, histidine 167, cysteine 184, and histidine 187. Fe cation contacts are provided by histidine 290 and histidine 295.

The protein belongs to the choline monooxygenase family. [2Fe-2S] cluster serves as cofactor. Requires Fe cation as cofactor. The cofactor is Mg(2+).

It is found in the plastid. Its subcellular location is the chloroplast stroma. It carries out the reaction choline + 2 reduced [2Fe-2S]-[ferredoxin] + O2 + 2 H(+) = betaine aldehyde hydrate + 2 oxidized [2Fe-2S]-[ferredoxin] + H2O. It functions in the pathway amine and polyamine biosynthesis; betaine biosynthesis via choline pathway; betaine aldehyde from choline (monooxygenase route): step 1/1. Its function is as follows. Catalyzes the first step of the osmoprotectant glycine betaine synthesis. This chain is Choline monooxygenase, chloroplastic (CMO), found in Amaranthus tricolor (Joseph's coat).